We begin with the raw amino-acid sequence, 454 residues long: tRNA modification GTPase MnmE (454 aa).

(6S)-5-formyl-5,6,7,8-tetrahydrofolate-binding residues include R23, E80, and K120. Residues 216-377 (GMRVVIAGRP…VREHLKACIG (162 aa)) enclose the TrmE-type G domain. N226 lines the K(+) pocket. GTP-binding positions include 226-231 (NAGKSS), 245-251 (TEIAGTT), 270-273 (DTAG), and 335-338 (NKAD). Mg(2+) is bound at residue S230. 3 residues coordinate K(+): T245, I247, and T250. Residue T251 participates in Mg(2+) binding. K454 contributes to the (6S)-5-formyl-5,6,7,8-tetrahydrofolate binding site.

Belongs to the TRAFAC class TrmE-Era-EngA-EngB-Septin-like GTPase superfamily. TrmE GTPase family. Homodimer. Heterotetramer of two MnmE and two MnmG subunits. The cofactor is K(+).

It is found in the cytoplasm. Exhibits a very high intrinsic GTPase hydrolysis rate. Involved in the addition of a carboxymethylaminomethyl (cmnm) group at the wobble position (U34) of certain tRNAs, forming tRNA-cmnm(5)s(2)U34. The chain is tRNA modification GTPase MnmE from Pseudoalteromonas translucida (strain TAC 125).